The sequence spans 282 residues: Large ribosomal subunit protein uL2 (282 aa).

Disordered stretches follow at residues 26–55 and 218–266; these read KKSPEKSLLESQSHTAGRNNYGRMTVRHRG and PHVR…HNKS. Polar residues predominate over residues 34 to 43; that stretch reads LESQSHTAGR. Over residues 254-266 the composition is skewed to basic residues; sequence TIGKKTRNKHNKS.

This sequence belongs to the universal ribosomal protein uL2 family. In terms of assembly, part of the 50S ribosomal subunit. Forms a bridge to the 30S subunit in the 70S ribosome.

Its function is as follows. One of the primary rRNA binding proteins. Required for association of the 30S and 50S subunits to form the 70S ribosome, for tRNA binding and peptide bond formation. It has been suggested to have peptidyltransferase activity; this is somewhat controversial. Makes several contacts with the 16S rRNA in the 70S ribosome. This chain is Large ribosomal subunit protein uL2, found in Pediococcus pentosaceus (strain ATCC 25745 / CCUG 21536 / LMG 10740 / 183-1w).